Here is a 337-residue protein sequence, read N- to C-terminus: Leucine-rich repeat-containing protein 39 (337 aa).

LRR repeat units lie at residues 84-105 (QLQEWQLHRTGLLKIPEFIGRF), 107-128 (HLIVLDLSRNTISEIPRGIGLL), 130-152 (RLQELILSYNKIKTVPKELSNCT), 153-176 (SLEKLELAVNRDISDLPPELSKLL), 177-198 (KLTHLDLSMNQFTTIPHAVLDM), 200-221 (ALEWLDMGSNSLQQLPDSLDRM), 223-244 (SLHTLWLQRNEITCLPETIKNM), 246-267 (NLGTLVLSNNKLQDIPGCMEEM), and 269-290 (NLRFVNFRDNPLRLEVTLPPSD).

As to quaternary structure, interacts with MYH7 (via C-terminus). As to expression, expressed in heart and skeletal muscle.

The protein localises to the cytoplasm. The protein resides in the myofibril. Its subcellular location is the sarcomere. It localises to the m line. Component of the sarcomeric M-band which plays a role in myocyte response to biomechanical stress. May regulate expression of other M-band proteins via an SRF-dependent pathway. Important for normal contractile function in heart. The polypeptide is Leucine-rich repeat-containing protein 39 (Mus musculus (Mouse)).